We begin with the raw amino-acid sequence, 321 residues long: Glutaminase (321 aa).

Substrate is bound by residues serine 69, asparagine 120, glutamate 165, asparagine 172, tyrosine 196, tyrosine 248, and valine 266.

The protein belongs to the glutaminase family. In terms of assembly, homotetramer.

It carries out the reaction L-glutamine + H2O = L-glutamate + NH4(+). This Bacteroides fragilis (strain ATCC 25285 / DSM 2151 / CCUG 4856 / JCM 11019 / LMG 10263 / NCTC 9343 / Onslow / VPI 2553 / EN-2) protein is Glutaminase.